A 379-amino-acid chain; its full sequence is Chaperone protein DnaJ (379 aa).

Residues 5 to 70 enclose the J domain; it reads DYYEVLGVSR…QKRAAYDQYG (66 aa). Residues 134 to 212 form a CR-type zinc finger; it reads GVTKEIRIPT…CHGHGRVEKS (79 aa). 8 residues coordinate Zn(2+): cysteine 147, cysteine 150, cysteine 164, cysteine 167, cysteine 186, cysteine 189, cysteine 200, and cysteine 203. CXXCXGXG motif repeat units follow at residues 147–154, 164–171, 186–193, and 200–207; these read CDVCHGSG, CPTCHGAG, CPHCHGRG, and CNKCHGHG.

The protein belongs to the DnaJ family. In terms of assembly, homodimer. Zn(2+) is required as a cofactor.

Its subcellular location is the cytoplasm. Its function is as follows. Participates actively in the response to hyperosmotic and heat shock by preventing the aggregation of stress-denatured proteins and by disaggregating proteins, also in an autonomous, DnaK-independent fashion. Unfolded proteins bind initially to DnaJ; upon interaction with the DnaJ-bound protein, DnaK hydrolyzes its bound ATP, resulting in the formation of a stable complex. GrpE releases ADP from DnaK; ATP binding to DnaK triggers the release of the substrate protein, thus completing the reaction cycle. Several rounds of ATP-dependent interactions between DnaJ, DnaK and GrpE are required for fully efficient folding. Also involved, together with DnaK and GrpE, in the DNA replication of plasmids through activation of initiation proteins. This chain is Chaperone protein DnaJ, found in Yersinia pestis bv. Antiqua (strain Antiqua).